Reading from the N-terminus, the 96-residue chain is Large ribosomal subunit protein bL28 (96 aa).

It belongs to the bacterial ribosomal protein bL28 family.

The chain is Large ribosomal subunit protein bL28 from Orientia tsutsugamushi (strain Boryong) (Rickettsia tsutsugamushi).